A 390-amino-acid polypeptide reads, in one-letter code: Methionyl-tRNA formyltransferase, mitochondrial (390 aa).

Residues 1–33 (MRVLLRCCCGHLPVGGGAGRRSNPRWRALARLS) constitute a mitochondrion transit peptide.

The protein belongs to the Fmt family.

The protein resides in the mitochondrion. The enzyme catalyses L-methionyl-tRNA(fMet) + (6R)-10-formyltetrahydrofolate = N-formyl-L-methionyl-tRNA(fMet) + (6S)-5,6,7,8-tetrahydrofolate + H(+). Functionally, methionyl-tRNA formyltransferase that formylates methionyl-tRNA in mitochondria and is crucial for translation initiation. This Bos taurus (Bovine) protein is Methionyl-tRNA formyltransferase, mitochondrial (MTFMT).